Reading from the N-terminus, the 200-residue chain is Recombination protein RecR (200 aa).

The segment at 59–74 adopts a C4-type zinc-finger fold; sequence CDICGNVCESSPCPVC. One can recognise a Toprim domain in the interval 82-177; sequence SVICVVEEPK…KVTRLASGLP (96 aa).

Belongs to the RecR family.

Its function is as follows. May play a role in DNA repair. It seems to be involved in an RecBC-independent recombinational process of DNA repair. It may act with RecF and RecO. The sequence is that of Recombination protein RecR from Bifidobacterium longum subsp. infantis (strain ATCC 15697 / DSM 20088 / JCM 1222 / NCTC 11817 / S12).